A 545-amino-acid polypeptide reads, in one-letter code: Chaperonin GroEL (545 aa).

Residues 30 to 33 (TLGP), K51, 87 to 91 (DGTTT), G415, 479 to 481 (NAA), and D495 each bind ATP. The tract at residues 526–545 (KEDKPDLGGAGGMGGMGGMM) is disordered. Residues 533–545 (GGAGGMGGMGGMM) are compositionally biased toward gly residues.

This sequence belongs to the chaperonin (HSP60) family. Forms a cylinder of 14 subunits composed of two heptameric rings stacked back-to-back. Interacts with the co-chaperonin GroES.

The protein localises to the cytoplasm. The catalysed reaction is ATP + H2O + a folded polypeptide = ADP + phosphate + an unfolded polypeptide.. Together with its co-chaperonin GroES, plays an essential role in assisting protein folding. The GroEL-GroES system forms a nano-cage that allows encapsulation of the non-native substrate proteins and provides a physical environment optimized to promote and accelerate protein folding. This is Chaperonin GroEL from Sodalis glossinidius.